The sequence spans 395 residues: Succinyl-diaminopimelate desuccinylase 2 (395 aa).

Histidine 79 is a binding site for Zn(2+). Residue aspartate 81 is part of the active site. A Zn(2+)-binding site is contributed by aspartate 112. Glutamate 145 functions as the Proton acceptor in the catalytic mechanism. The Zn(2+) site is built by glutamate 146, glutamate 174, and histidine 363.

It belongs to the peptidase M20A family. DapE subfamily. As to quaternary structure, homodimer. Zn(2+) is required as a cofactor. Co(2+) serves as cofactor.

It catalyses the reaction N-succinyl-(2S,6S)-2,6-diaminopimelate + H2O = (2S,6S)-2,6-diaminopimelate + succinate. Its pathway is amino-acid biosynthesis; L-lysine biosynthesis via DAP pathway; LL-2,6-diaminopimelate from (S)-tetrahydrodipicolinate (succinylase route): step 3/3. Functionally, catalyzes the hydrolysis of N-succinyl-L,L-diaminopimelic acid (SDAP), forming succinate and LL-2,6-diaminopimelate (DAP), an intermediate involved in the bacterial biosynthesis of lysine and meso-diaminopimelic acid, an essential component of bacterial cell walls. The sequence is that of Succinyl-diaminopimelate desuccinylase 2 from Ruegeria sp. (strain TM1040) (Silicibacter sp.).